Reading from the N-terminus, the 330-residue chain is Phosphate acyltransferase (330 aa).

This sequence belongs to the PlsX family. Homodimer. Probably interacts with PlsY.

It is found in the cytoplasm. It carries out the reaction a fatty acyl-[ACP] + phosphate = an acyl phosphate + holo-[ACP]. It functions in the pathway lipid metabolism; phospholipid metabolism. In terms of biological role, catalyzes the reversible formation of acyl-phosphate (acyl-PO(4)) from acyl-[acyl-carrier-protein] (acyl-ACP). This enzyme utilizes acyl-ACP as fatty acyl donor, but not acyl-CoA. The polypeptide is Phosphate acyltransferase (Streptococcus pneumoniae (strain ATCC 700669 / Spain 23F-1)).